The following is a 719-amino-acid chain: DNA ligase (719 aa).

NAD(+) is bound by residues 42 to 46 (DAEYD), 91 to 92 (SL), and Glu125. Lys127 (N6-AMP-lysine intermediate) is an active-site residue. Residues Arg148, Glu184, Lys300, and Lys324 each contribute to the NAD(+) site. Residues Cys429, Cys432, Cys447, and Cys453 each coordinate Zn(2+). The region spanning 638-719 (TASSPIAEKI…WMRLIKGHNI (82 aa)) is the BRCT domain.

Belongs to the NAD-dependent DNA ligase family. LigA subfamily. Mg(2+) is required as a cofactor. Mn(2+) serves as cofactor.

The catalysed reaction is NAD(+) + (deoxyribonucleotide)n-3'-hydroxyl + 5'-phospho-(deoxyribonucleotide)m = (deoxyribonucleotide)n+m + AMP + beta-nicotinamide D-nucleotide.. Functionally, DNA ligase that catalyzes the formation of phosphodiester linkages between 5'-phosphoryl and 3'-hydroxyl groups in double-stranded DNA using NAD as a coenzyme and as the energy source for the reaction. It is essential for DNA replication and repair of damaged DNA. The polypeptide is DNA ligase (Bartonella tribocorum (strain CIP 105476 / IBS 506)).